Consider the following 554-residue polypeptide: 3-(3-hydroxy-phenyl)propionate/3-hydroxycinnamic acid hydroxylase (554 aa).

Residues 17 to 46 (QVAI…VVEK) and 285 to 295 (FRIDRVLLAGD) each bind FAD.

It belongs to the PheA/TfdB FAD monooxygenase family. The cofactor is FAD.

It catalyses the reaction 3-(3-hydroxyphenyl)propanoate + NADH + O2 + H(+) = 3-(2,3-dihydroxyphenyl)propanoate + NAD(+) + H2O. It carries out the reaction (2E)-3-(3-hydroxyphenyl)prop-2-enoate + NADH + O2 + H(+) = (2E)-3-(2,3-dihydroxyphenyl)prop-2-enoate + NAD(+) + H2O. Its pathway is aromatic compound metabolism; 3-phenylpropanoate degradation. Catalyzes the insertion of one atom of molecular oxygen into position 2 of the phenyl ring of 3-(3-hydroxyphenyl)propionate (3-HPP) and hydroxycinnamic acid (3HCI). This chain is 3-(3-hydroxy-phenyl)propionate/3-hydroxycinnamic acid hydroxylase, found in Escherichia coli O17:K52:H18 (strain UMN026 / ExPEC).